Here is a 966-residue protein sequence, read N- to C-terminus: Translation initiation factor IF-2 (966 aa).

5 stretches are compositionally biased toward basic and acidic residues: residues 99–113 (KRDE…EAAD), 123–183 (EQAR…KAEE), 197–212 (DASR…RVAV), 220–249 (AADD…EAEA), and 266–277 (PSERKAEEKKAE). The segment at 99 to 382 (KRDEAGADQH…NFQAPTEPVV (284 aa)) is disordered. The segment covering 304-315 (AATTTTTTATTT) has biased composition (low complexity). A compositionally biased stretch (gly residues) spans 346 to 359 (SSGGVGGWRGGPRG). The region spanning 466 to 635 (PRPPVVTVMG…LLQAEVLELK (170 aa)) is the tr-type G domain. Residues 475–482 (GHVDHGKT) form a G1 region. 475–482 (GHVDHGKT) lines the GTP pocket. Residues 500–504 (GITQH) are G2. Residues 521–524 (DTPG) form a G3 region. GTP contacts are provided by residues 521 to 525 (DTPGH) and 575 to 578 (NKID). The segment at 575-578 (NKID) is G4. The interval 611-613 (SAK) is G5.

This sequence belongs to the TRAFAC class translation factor GTPase superfamily. Classic translation factor GTPase family. IF-2 subfamily.

It localises to the cytoplasm. Functionally, one of the essential components for the initiation of protein synthesis. Protects formylmethionyl-tRNA from spontaneous hydrolysis and promotes its binding to the 30S ribosomal subunits. Also involved in the hydrolysis of GTP during the formation of the 70S ribosomal complex. The sequence is that of Translation initiation factor IF-2 from Cupriavidus pinatubonensis (strain JMP 134 / LMG 1197) (Cupriavidus necator (strain JMP 134)).